The sequence spans 65 residues: Crotamine CRO1 (65 aa).

The first 22 residues, 1–22, serve as a signal peptide directing secretion; the sequence is MKILYLLFAFLFLAFLSEPGNA. Cystine bridges form between Cys26–Cys58, Cys33–Cys52, and Cys40–Cys59.

The protein belongs to the crotamine-myotoxin family. As to quaternary structure, monomer. Expressed by the venom gland.

It localises to the secreted. Functionally, cationic peptide that possesses multiple functions. It acts as a cell-penetrating peptide (CPP), and as a potent voltage-gated potassium channel (Kv) inhibitor. It exhibits antimicrobial activities, hind limb paralysis, and severe muscle necrosis by a non-enzymatic mechanism. The chain is Crotamine CRO1 (CRO1) from Crotalus durissus terrificus (South American rattlesnake).